Reading from the N-terminus, the 356-residue chain is Alanine racemase (356 aa).

The active-site Proton acceptor; specific for D-alanine is the Lys-35. At Lys-35 the chain carries N6-(pyridoxal phosphate)lysine. Substrate is bound at residue Arg-130. Residue Tyr-253 is the Proton acceptor; specific for L-alanine of the active site. Met-301 is a substrate binding site.

This sequence belongs to the alanine racemase family. The cofactor is pyridoxal 5'-phosphate.

The enzyme catalyses L-alanine = D-alanine. It participates in amino-acid biosynthesis; D-alanine biosynthesis; D-alanine from L-alanine: step 1/1. Its function is as follows. Catalyzes the interconversion of L-alanine and D-alanine. May also act on other amino acids. This is Alanine racemase (alr) from Burkholderia mallei (strain NCTC 10229).